A 434-amino-acid polypeptide reads, in one-letter code: Threonylcarbamoyladenosine tRNA methylthiotransferase MtaB (434 aa).

Residues 2–112 (KTVRIETFGC…IVDHINSLNG (111 aa)) enclose the MTTase N-terminal domain. [4Fe-4S] cluster is bound by residues cysteine 11, cysteine 46, cysteine 77, cysteine 147, cysteine 151, and cysteine 154. Positions 133-362 (FEDRTRSYIK…KEKAKDVSIR (230 aa)) constitute a Radical SAM core domain.

This sequence belongs to the methylthiotransferase family. MtaB subfamily. The cofactor is [4Fe-4S] cluster.

The protein localises to the cytoplasm. The enzyme catalyses N(6)-L-threonylcarbamoyladenosine(37) in tRNA + (sulfur carrier)-SH + AH2 + 2 S-adenosyl-L-methionine = 2-methylsulfanyl-N(6)-L-threonylcarbamoyladenosine(37) in tRNA + (sulfur carrier)-H + 5'-deoxyadenosine + L-methionine + A + S-adenosyl-L-homocysteine + 2 H(+). In terms of biological role, catalyzes the methylthiolation of N6-threonylcarbamoyladenosine (t(6)A), leading to the formation of 2-methylthio-N6-threonylcarbamoyladenosine (ms(2)t(6)A) at position 37 in tRNAs that read codons beginning with adenine. This chain is Threonylcarbamoyladenosine tRNA methylthiotransferase MtaB (mtaB), found in Thermotoga maritima (strain ATCC 43589 / DSM 3109 / JCM 10099 / NBRC 100826 / MSB8).